The primary structure comprises 132 residues: ATP synthase epsilon chain (132 aa).

It belongs to the ATPase epsilon chain family. F-type ATPases have 2 components, CF(1) - the catalytic core - and CF(0) - the membrane proton channel. CF(1) has five subunits: alpha(3), beta(3), gamma(1), delta(1), epsilon(1). CF(0) has three main subunits: a, b and c.

Its subcellular location is the cell membrane. Functionally, produces ATP from ADP in the presence of a proton gradient across the membrane. This chain is ATP synthase epsilon chain (atpC), found in Bacillus caldotenax.